The following is a 561-amino-acid chain: Potassium-transporting ATPase potassium-binding subunit (561 aa).

Transmembrane regions (helical) follow at residues 5 to 25 (LAAGLQIASVVAVLALVYVPL), 60 to 80 (CGYAGSVLGFSLAGVLVLYVL), 86 to 106 (VLPLSHGLAGVSPAVAFNTAV), 131 to 151 (GLAVQNFVSAAVGMAVAVALI), 177 to 197 (ILLPLAFVIALILLSQGVIQS), 247 to 267 (PTPLSNVVQILAILLIPVALT), 281 to 301 (LTVLAVMAGIYAVILGVTTAA), 376 to 396 (GLYGILVLAVIAVFVGGLLVG), 415 to 435 (ALAVLVMPALVLIGTAITVVL), 489 to 509 (LGLCMLFGRFLPILFVLALAG), and 531 to 551 (FAGLLTGTVVLVAALTFFPVL).

Belongs to the KdpA family. The system is composed of three essential subunits: KdpA, KdpB and KdpC.

It is found in the cell membrane. Functionally, part of the high-affinity ATP-driven potassium transport (or Kdp) system, which catalyzes the hydrolysis of ATP coupled with the electrogenic transport of potassium into the cytoplasm. This subunit binds the extracellular potassium ions and delivers the ions to the membrane domain of KdpB through an intramembrane tunnel. This is Potassium-transporting ATPase potassium-binding subunit from Nocardia farcinica (strain IFM 10152).